The following is a 772-amino-acid chain: MSHTTITNFLAGVIARPQGGNITSDETFRRYRTIVRTSATIGGNEDSRTTSIFHEIGRAVNTKGKALAVAGMEAPLVEASYPTNAVLVEDFIGLAKKYTNFSATFEYSSLAGVVERLARGLAACSVFEDVTSTDLRGNNPLAVHALATYDGPVNSLTSAVFIPRLVNNALTGDVFAVLCNCVAGEGGTVVTDTIELDANTRQPIVPEVGPLGVPGAIVDALRLLGSNMIASDQGPLFALALTRGIHRVLSVVGHTDEGGIVRDLLRCGGFGLPFGGIHYGLEEYSGLPALQFNSAAATAAYVDGIALVTAAVVAHADPGERYNGEWFPTFFDGTTHADTMRRSGDSTEGTAAMADRNRAQLLARQQLFWRPYITALGACFSTAGDISVAERFQCAASHSLGADPRHLRLPSVAPYFWIEPTGLIPHDFLGSVAEEEGFASYCWRDTTRTRPAWDSIVLSGARDTTFSAYHIRMKGARTAWFLAHWLGHPENGLGATRVRQLDPNAVLHPGPCEGNEQVRDRVEADLPLTDYLWRRGQSPFPAAGELLNLTSEWGILFRHVTFTDDGDLNPEHLPAAHEMADTTVTMTVGRPIGIAPGRSNAGDNQARRARTRASVELSAASRRARVFGRPDVGEMPTLTSAPAPIPASPAYDGNRGGEAGGVTGRGNNRSAAPGHASWSERQADGVPVNVTPHHNALRAPPFPRQQGALGGGGNVPLPPAPGAAPPPPPGPPNGPPAGPPPSDDGSSNPAAPVPTAIHAPPAAAQADRAEGQ.

Residues 593–772 (GIAPGRSNAG…AAQADRAEGQ (180 aa)) are disordered. Residues 654–664 (NRGGEAGGVTG) show a composition bias toward gly residues. The segment covering 716–742 (PLPPAPGAAPPPPPGPPNGPPAGPPPS) has biased composition (pro residues). The segment covering 743 to 766 (DDGSSNPAAPVPTAIHAPPAAAQA) has biased composition (low complexity).

It belongs to the totivirus major capsid protein family.

The protein resides in the virion. Capsid protein self-assembles to form an icosahedral capsid with a T=2 symmetry, 40 nm in diameter, and consisting of 60 capsid proteins asymmetric dimers. The capsid encapsulates the genomic dsRNA and the polymerase and remains intact following cell entry to protect the dsRNA from degradation and to prevent unfavorable antiviral responses in the host cell during all the replication cycle of the virus. Nascent transcripts are transcribed within the structural confines of the virion and are extruded into the cytoplasm. Its function is as follows. Binds and removes 5' cap structures from cellular mRNA. The sequence is that of Major capsid protein from Helminthosporium victoriae virus-190S (Hv190SV).